A 205-amino-acid chain; its full sequence is Guanylate kinase (205 aa).

The Guanylate kinase-like domain maps to G3–L181. A10–T17 lines the ATP pocket.

The protein belongs to the guanylate kinase family.

Its subcellular location is the cytoplasm. It carries out the reaction GMP + ATP = GDP + ADP. Functionally, essential for recycling GMP and indirectly, cGMP. The protein is Guanylate kinase of Hydrogenovibrio crunogenus (strain DSM 25203 / XCL-2) (Thiomicrospira crunogena).